The following is a 176-amino-acid chain: Secreted LysM effector ELP2 (176 aa).

Positions 1-18 (MQFSIFTVLAAAASFAVA) are cleaved as a signal peptide. The segment covering 31–45 (TSAAANPSPTTSGAA) has biased composition (low complexity). The disordered stretch occupies residues 31–50 (TSAAANPSPTTSGAANPSPT). A LysM 1 domain is found at 58 to 102 (HKTTVKAGQTLTTIAERFHSGICDIAWQNKLENPNVIFVGQVLLV). The N-linked (GlcNAc...) asparagine glycan is linked to asparagine 111. Residues 129–173 (ATYTIKSGDTFFAVAQSLGITTDSLTGANPGVVPENLQIDQVINV) form the LysM 2 domain.

Belongs to the secreted LysM effector family. In terms of assembly, forms homodimers in a chitin-independent manner through interactions at the N-termini of EPL2 monomers. Homodimers are further polymerized in a chitin-dependent manner.

Its subcellular location is the secreted. In terms of biological role, secreted effector that enables the plant pathogenic fungus to manipulate host defenses for successful infection. Binds chitin oligomers and polymer with high affinity and plays a dual role, not only in the suppression of chitin-triggered immune responses, but also in appressorium function. Does not protect fungal hyphae against plant chitinases but suppresses chitin-triggered plant immune responses. Chitin-induced polymerization of homodimers forms a contiguous ELP2 highly oligomeric super-complexe that may precipitate at infection sites to eliminate chitin oligomers, and thus suppress the activation of chitin-induced plant immunity. The polypeptide is Secreted LysM effector ELP2 (Colletotrichum higginsianum (strain IMI 349063) (Crucifer anthracnose fungus)).